We begin with the raw amino-acid sequence, 281 residues long: Undecaprenyl-diphosphatase (281 aa).

Transmembrane regions (helical) follow at residues 90–110, 113–133, 147–167, 191–211, 217–237, and 257–277; these read WLVT…QDSI, VLRG…VLGA, LSWK…IPGV, SFLL…YDEL, IAWV…YAVI, and IAAA…AFQG.

The protein belongs to the UppP family.

It is found in the cell membrane. It carries out the reaction di-trans,octa-cis-undecaprenyl diphosphate + H2O = di-trans,octa-cis-undecaprenyl phosphate + phosphate + H(+). Functionally, catalyzes the dephosphorylation of undecaprenyl diphosphate (UPP). Confers resistance to bacitracin. The polypeptide is Undecaprenyl-diphosphatase (Kineococcus radiotolerans (strain ATCC BAA-149 / DSM 14245 / SRS30216)).